The following is a 341-amino-acid chain: S-adenosylmethionine:tRNA ribosyltransferase-isomerase (341 aa).

This sequence belongs to the QueA family. In terms of assembly, monomer.

Its subcellular location is the cytoplasm. The enzyme catalyses 7-aminomethyl-7-carbaguanosine(34) in tRNA + S-adenosyl-L-methionine = epoxyqueuosine(34) in tRNA + adenine + L-methionine + 2 H(+). It participates in tRNA modification; tRNA-queuosine biosynthesis. In terms of biological role, transfers and isomerizes the ribose moiety from AdoMet to the 7-aminomethyl group of 7-deazaguanine (preQ1-tRNA) to give epoxyqueuosine (oQ-tRNA). The chain is S-adenosylmethionine:tRNA ribosyltransferase-isomerase from Chlorobium chlorochromatii (strain CaD3).